The following is a 429-amino-acid chain: O-methyltransferase phnC (429 aa).

D285 contacts S-adenosyl-L-methionine.

This sequence belongs to the class I-like SAM-binding methyltransferase superfamily. Cation-independent O-methyltransferase family. COMT subfamily.

The catalysed reaction is (2'R)-atrovenetin + S-adenosyl-L-methionine = deoxyherqueinone + S-adenosyl-L-homocysteine + H(+). It functions in the pathway secondary metabolite biosynthesis. In terms of biological role, O-methyltransferase; part of the gene cluster that mediates the biosynthesis of phenalenones such as herqueinone, compounds that have been reported to treat tumors, bacterial infections and/or mycoses, and rheumatic diseases. The non-reducing polyketide synthase phnA synthesizes the heptaketide backbone and cyclizes it into the angular, hemiketal-containing naphtho-gamma-pyrone prephenalenone. The product template (PT) domain of phnA catalyzes only the C4-C9 aldol condensation, which is unprecedented among known PT domains. The transformation of prephenalenone to phenalenones requires an FAD-dependent monooxygenase phnB, which catalyzes the C2 aromatic hydroxylation of prephenalenone and ring opening of the gamma-pyrone ring simultaneously. Subsequent intramolecular deprotonation of C3 phenolic oxygen accelerates phenalenone ring closure to yield the tricyclic phenalenone core with a C2 hydroxylation. The prenyltransferase phnF further catalyzes reverse C-prenylation of phenalenone by direct electrophilic substitution at C6, or possibly via first a forward O-prenylation of a neighboring phenol in phenalenone, followed by a Claisen rearrangement. The hydroalkoxylation enzyme phnH catalyzes the 5-exo-trig cyclization via acid catalysis after the spontaneous deprotonation of 7-OH, which leads to the formation of the dihydrobenzofuran atrovenetin. Atrovenetin is further converted to deoxyherqueinone by the O-methyltransferase phnC which can methylate C2-OH to stabilize the northern portion of the phenalenone core. Finally, the oxidoreductase phnG converts deoxyherqueinone to herqueinone via C6 hydroxylation. This Penicillium herquei protein is O-methyltransferase phnC.